The sequence spans 758 residues: 5-methyltetrahydropteroyltriglutamate--homocysteine methyltransferase (758 aa).

Residues 16–19 (RELK) and Lys-112 contribute to the 5-methyltetrahydropteroyltri-L-glutamate site. L-homocysteine contacts are provided by residues 433-435 (IGS) and Glu-486. Residues 433-435 (IGS) and Glu-486 each bind L-methionine. Residues 517–518 (RC) and Trp-563 contribute to the 5-methyltetrahydropteroyltri-L-glutamate site. Asp-601 is an L-homocysteine binding site. An L-methionine-binding site is contributed by Asp-601. Residue Glu-607 coordinates 5-methyltetrahydropteroyltri-L-glutamate. Residues His-643, Cys-645, and Glu-667 each contribute to the Zn(2+) site. His-696 serves as the catalytic Proton donor. Zn(2+) is bound at residue Cys-728.

Belongs to the vitamin-B12 independent methionine synthase family. The cofactor is Zn(2+).

The catalysed reaction is 5-methyltetrahydropteroyltri-L-glutamate + L-homocysteine = tetrahydropteroyltri-L-glutamate + L-methionine. Its pathway is amino-acid biosynthesis; L-methionine biosynthesis via de novo pathway; L-methionine from L-homocysteine (MetE route): step 1/1. In terms of biological role, catalyzes the transfer of a methyl group from 5-methyltetrahydrofolate to homocysteine resulting in methionine formation. In Neisseria meningitidis serogroup C (strain 053442), this protein is 5-methyltetrahydropteroyltriglutamate--homocysteine methyltransferase.